Consider the following 76-residue polypeptide: Conotoxin Im6.9 (76 aa).

A signal peptide spans 1–19; sequence MEKLTILLLVTAVLMSTQA. A propeptide spanning residues 20–45 is cleaved from the precursor; that stretch reads LMQSGIEKRQRAKIKFFSKRKTTAER. 3 disulfide bridges follow: C51–C65, C58–C69, and C64–C73.

The protein belongs to the conotoxin O2 superfamily. Expressed by the venom duct.

The protein resides in the secreted. Probable neurotoxin. This is Conotoxin Im6.9 from Conus imperialis (Imperial cone).